The chain runs to 244 residues: Capsid protein (244 aa).

The Bipartite nuclear localization signal motif lies at 1–24; sequence MSTSKRKRGDDANWSKRVTKKKPS. A disordered region spans residues 1 to 39; sequence MSTSKRKRGDDANWSKRVTKKKPSSAGLKRAGSKADRPS.

Belongs to the geminiviridae capsid protein family. In terms of assembly, homomultimer. Interacts with the movement protein. Binds to single-stranded and double-stranded viral DNA.

It is found in the virion. The protein localises to the host nucleus. In terms of biological role, encapsidates the viral genome into characteristic twinned ('geminate') particles. Binds the genomic viral ssDNA and shuttles it into and out of the cell nucleus. Plays a role in protection of the genome from degradation, virus acquisition and transmission by insect vectors, infectivity, and systemic movement. The CP of monopartite geminiviruses is absolutely essential for virus movement. The polypeptide is Capsid protein (Maize streak virus genotype A (isolate Kenya) (MSV)).